Reading from the N-terminus, the 386-residue chain is Leupaxin (386 aa).

Met1 is subject to N-acetylmethionine. An LD motif 1 motif is present at residues 3-15 (ELDALLEELERST). Positions 12–51 (ERSTLQDSDEYSNSAPLPLDQSSRKESNLDETSKMLSVQD) are disordered. The span at 16 to 26 (LQDSDEYSNSA) shows a compositional bias: polar residues. Ser19 bears the Phosphoserine mark. Tyr22 carries the post-translational modification Phosphotyrosine. The segment covering 33-44 (SSRKESNLDETS) has biased composition (basic and acidic residues). Tyr62 carries the phosphotyrosine modification. 2 consecutive short sequence motifs (LD motif) follow at residues 70 to 82 (NVYS…KKSP) and 92 to 103 (QLDELMAHLSEM). Tyr72 carries the post-translational modification Phosphotyrosine; by LYN. The residue at position 81 (Ser81) is a Phosphoserine. LIM zinc-binding domains are found at residues 150 to 209 (GHCA…LFSP), 210 to 267 (RCAY…AMFS), 268 to 327 (PKCG…RRGT), and 328 to 386 (LCHG…LFSL).

Belongs to the paxillin family. Interacts with unphosphorylated ITGA4. Interacts with AR and SRF. Interacts with PTK2B/PYK2, PTPN22 and PTPN12. Interacts (via LD motif 3) with LYN and the interaction is induced upon B-cell antigen receptor (BCR) activation. Interacts (via LD motif 3) with PTK2/FAK. Post-translationally, phosphorylated on tyrosine residues. Phosphorylation on Tyr-72 is important for its inhibitory function. Bombesin stimulates phosphorylation on Tyr-22, Tyr-62 and Tyr-72.

It localises to the cytoplasm. The protein localises to the cell junction. Its subcellular location is the focal adhesion. The protein resides in the nucleus. It is found in the perinuclear region. It localises to the cell projection. The protein localises to the podosome. Its subcellular location is the cell membrane. Transcriptional coactivator for androgen receptor (AR) and serum response factor (SRF). Contributes to the regulation of cell adhesion, spreading and cell migration and acts as a negative regulator in integrin-mediated cell adhesion events. Suppresses the integrin-induced tyrosine phosphorylation of paxillin (PXN). May play a critical role as an adapter protein in the formation of the adhesion zone in osteoclasts. Negatively regulates B-cell antigen receptor (BCR) signaling. This is Leupaxin (LPXN) from Oryctolagus cuniculus (Rabbit).